The sequence spans 337 residues: Glyceraldehyde-3-phosphate dehydrogenase (337 aa).

NAD(+)-binding positions include 13–14, Asp-35, and Arg-80; that span reads RI. D-glyceraldehyde 3-phosphate contacts are provided by residues 150–152, Thr-181, 210–211, and Arg-233; these read SCT and TG. Cys-151 acts as the Nucleophile in catalysis. Asn-315 contacts NAD(+).

This sequence belongs to the glyceraldehyde-3-phosphate dehydrogenase family. Homotetramer.

The protein resides in the cytoplasm. The enzyme catalyses D-glyceraldehyde 3-phosphate + phosphate + NAD(+) = (2R)-3-phospho-glyceroyl phosphate + NADH + H(+). The protein operates within carbohydrate degradation; glycolysis; pyruvate from D-glyceraldehyde 3-phosphate: step 1/5. The protein is Glyceraldehyde-3-phosphate dehydrogenase (GPDA) of Colletotrichum lindemuthianum (Bean anthracnose fungus).